Consider the following 261-residue polypeptide: L-erythrulose-1-phosphate isomerase (261 aa).

The active-site Electrophile is histidine 99. Glutamate 172 serves as the catalytic Proton acceptor.

Belongs to the triosephosphate isomerase family.

It carries out the reaction L-erythrulose 1-phosphate = D-erythrulose 4-phosphate. Its pathway is carbohydrate metabolism. Involved in catabolism of D-apiose. Catalyzes the isomerization of L-erythrulose 1-phosphate to D-erythrulose 4-phosphate. The chain is L-erythrulose-1-phosphate isomerase from Rhizobium rhizogenes (strain K84 / ATCC BAA-868) (Agrobacterium radiobacter).